A 228-amino-acid polypeptide reads, in one-letter code: ATP-dependent dethiobiotin synthetase BioD 1 (228 aa).

E13–V18 lines the ATP pocket. A Mg(2+)-binding site is contributed by T17. Residue K38 is part of the active site. S42 contributes to the substrate binding site. Residues D55, E116–G119, N176–D177, and P205–L207 contribute to the ATP site. Residues D55 and E116 each coordinate Mg(2+).

The protein belongs to the dethiobiotin synthetase family. Homodimer. Mg(2+) is required as a cofactor.

It is found in the cytoplasm. The catalysed reaction is (7R,8S)-7,8-diammoniononanoate + CO2 + ATP = (4R,5S)-dethiobiotin + ADP + phosphate + 3 H(+). The protein operates within cofactor biosynthesis; biotin biosynthesis; biotin from 7,8-diaminononanoate: step 1/2. Catalyzes a mechanistically unusual reaction, the ATP-dependent insertion of CO2 between the N7 and N8 nitrogen atoms of 7,8-diaminopelargonic acid (DAPA, also called 7,8-diammoniononanoate) to form a ureido ring. The protein is ATP-dependent dethiobiotin synthetase BioD 1 of Salmonella typhimurium (strain LT2 / SGSC1412 / ATCC 700720).